Reading from the N-terminus, the 691-residue chain is DNA ligase (691 aa).

A disordered region spans residues 1–22 (MTTAEDVAGNPYISDPRTDFES). NAD(+) contacts are provided by residues 59-63 (DRAYD), 107-108 (SI), and Glu137. Catalysis depends on Lys139, which acts as the N6-AMP-lysine intermediate. Positions 160, 196, 311, and 335 each coordinate NAD(+). Zn(2+) contacts are provided by Cys426, Cys429, Cys442, and Cys448. One can recognise a BRCT domain in the interval 608–691 (TDGDALDGQT…EELLDDAGVL (84 aa)). The disordered stretch occupies residues 637–667 (ERNDGSATSSVSGNTDYLVLGDNPGQRKQDD). Residues 641–651 (GSATSSVSGNT) show a composition bias toward polar residues.

The protein belongs to the NAD-dependent DNA ligase family. LigA subfamily. Mg(2+) serves as cofactor. It depends on Mn(2+) as a cofactor.

It carries out the reaction NAD(+) + (deoxyribonucleotide)n-3'-hydroxyl + 5'-phospho-(deoxyribonucleotide)m = (deoxyribonucleotide)n+m + AMP + beta-nicotinamide D-nucleotide.. Its function is as follows. DNA ligase that catalyzes the formation of phosphodiester linkages between 5'-phosphoryl and 3'-hydroxyl groups in double-stranded DNA using NAD as a coenzyme and as the energy source for the reaction. It is essential for DNA replication and repair of damaged DNA. This Haloarcula marismortui (strain ATCC 43049 / DSM 3752 / JCM 8966 / VKM B-1809) (Halobacterium marismortui) protein is DNA ligase.